Consider the following 543-residue polypeptide: CTP synthase (543 aa).

Positions 1–265 (MARYIFITGG…DDEVLAAFGI (265 aa)) are amidoligase domain. A CTP-binding site is contributed by S13. A UTP-binding site is contributed by S13. Residue 14 to 19 (SLGKGL) participates in ATP binding. Y54 serves as a coordination point for L-glutamine. Residue D71 coordinates ATP. 2 residues coordinate Mg(2+): D71 and E139. CTP contacts are provided by residues 146–148 (DIE), 186–191 (KTKPTQ), and K222. Residues 186–191 (KTKPTQ) and K222 each bind UTP. ATP is bound at residue 238-240 (RDA). The Glutamine amidotransferase type-1 domain maps to 291–542 (TIAIVGKYTG…IQAAVVQSRL (252 aa)). G353 provides a ligand contact to L-glutamine. C380 functions as the Nucleophile; for glutamine hydrolysis in the catalytic mechanism. Residues 381–384 (FGMQ), E404, and R470 each bind L-glutamine. Residues H515 and E517 contribute to the active site.

This sequence belongs to the CTP synthase family. In terms of assembly, homotetramer.

It carries out the reaction UTP + L-glutamine + ATP + H2O = CTP + L-glutamate + ADP + phosphate + 2 H(+). The enzyme catalyses L-glutamine + H2O = L-glutamate + NH4(+). It catalyses the reaction UTP + NH4(+) + ATP = CTP + ADP + phosphate + 2 H(+). It participates in pyrimidine metabolism; CTP biosynthesis via de novo pathway; CTP from UDP: step 2/2. Allosterically activated by GTP, when glutamine is the substrate; GTP has no effect on the reaction when ammonia is the substrate. The allosteric effector GTP functions by stabilizing the protein conformation that binds the tetrahedral intermediate(s) formed during glutamine hydrolysis. Inhibited by the product CTP, via allosteric rather than competitive inhibition. Catalyzes the ATP-dependent amination of UTP to CTP with either L-glutamine or ammonia as the source of nitrogen. Regulates intracellular CTP levels through interactions with the four ribonucleotide triphosphates. This chain is CTP synthase, found in Nitrobacter winogradskyi (strain ATCC 25391 / DSM 10237 / CIP 104748 / NCIMB 11846 / Nb-255).